Here is a 429-residue protein sequence, read N- to C-terminus: D-galactonate dehydratase family member Caci_4410 (429 aa).

The disordered stretch occupies residues 1–22; the sequence is MTDANHLLDPSGALPQTRPPWT. Asp-233 is a Mg(2+) binding site. Position 235 (His-235) interacts with D-arabinonate. Residues Glu-259 and Glu-285 each coordinate Mg(2+). The D-arabinonate site is built by Glu-285, Arg-306, His-335, and Glu-362.

It belongs to the mandelate racemase/muconate lactonizing enzyme family. GalD subfamily.

Functionally, has no detectable activity with D-mannonate and with a panel of 70 other acid sugars (in vitro), in spite of the conservation of the residues that are expected to be important for catalytic activity and cofactor binding. May have evolved a divergent function. This Catenulispora acidiphila (strain DSM 44928 / JCM 14897 / NBRC 102108 / NRRL B-24433 / ID139908) protein is D-galactonate dehydratase family member Caci_4410.